We begin with the raw amino-acid sequence, 259 residues long: MTRREDGRLDDELRPLVITRGFTEHPAGSVLIEFGHTKVMCTASVTEGVPRWRKGSGLGWLTAEYAMLPSATHTRSDRESVKGRLSGRTQEISRLIGRSLRACIDLAALGENTIAVDCDVLQADGGTRTAAITGAFVALADAVTYLSAAGKLSDPRPLSCAIAAVSVGVVDGRIRVDLPYEEDARAEVDMNVVATDTGTLVEVQGTGEGATFPRSTLDKLLDAALAACDKLFAAQREALKLPYPGVLPEGPPPPKAFGS.

Residues Arg-88 and 126-128 (GTR) each bind phosphate.

This sequence belongs to the RNase PH family. Homohexameric ring arranged as a trimer of dimers.

It carries out the reaction tRNA(n+1) + phosphate = tRNA(n) + a ribonucleoside 5'-diphosphate. Phosphorolytic 3'-5' exoribonuclease that plays an important role in tRNA 3'-end maturation. Removes nucleotide residues following the 3'-CCA terminus of tRNAs; can also add nucleotides to the ends of RNA molecules by using nucleoside diphosphates as substrates, but this may not be physiologically important. Probably plays a role in initiation of 16S rRNA degradation (leading to ribosome degradation) during starvation. The chain is Ribonuclease PH from Mycolicibacterium paratuberculosis (strain ATCC BAA-968 / K-10) (Mycobacterium paratuberculosis).